The following is a 469-amino-acid chain: 3-isopropylmalate dehydratase large subunit (469 aa).

Positions 347, 407, and 410 each coordinate [4Fe-4S] cluster.

The protein belongs to the aconitase/IPM isomerase family. LeuC type 1 subfamily. As to quaternary structure, heterodimer of LeuC and LeuD. [4Fe-4S] cluster is required as a cofactor.

The enzyme catalyses (2R,3S)-3-isopropylmalate = (2S)-2-isopropylmalate. The protein operates within amino-acid biosynthesis; L-leucine biosynthesis; L-leucine from 3-methyl-2-oxobutanoate: step 2/4. Catalyzes the isomerization between 2-isopropylmalate and 3-isopropylmalate, via the formation of 2-isopropylmaleate. The polypeptide is 3-isopropylmalate dehydratase large subunit (Sorangium cellulosum (strain So ce56) (Polyangium cellulosum (strain So ce56))).